Here is a 214-residue protein sequence, read N- to C-terminus: UPF0725 protein At1g19565 (214 aa).

The tract at residues 56 to 92 (EEEYEPSLPSSESPTDSCHADHESPDSPKYQQPAPGE) is disordered.

This sequence belongs to the UPF0725 (EMB2204) family.

The chain is UPF0725 protein At1g19565 from Arabidopsis thaliana (Mouse-ear cress).